The chain runs to 107 residues: uncharacterized protein (107 aa).

This is an uncharacterized protein from Acidianus convivator (ABV).